Here is a 261-residue protein sequence, read N- to C-terminus: Thioredoxin-like protein HCF164, chloroplastic (261 aa).

The transit peptide at 1–40 (MARLVFSLNLPSSHGFNLSPRNLQSFFVTQTGAPRFRAVR) directs the protein to the chloroplast. The disordered stretch occupies residues 39–91 (VRCKPNPESSETKQEKLVIDNGETSSASKEVESSSSVADSSSSSSSGFPESPN). The segment covering 63–84 (SSASKEVESSSSVADSSSSSSS) has biased composition (low complexity). Residues 101-229 (VTVIAALSLF…LVENVNALAA (129 aa)) enclose the Thioredoxin domain. Active-site nucleophile residues include Cys-150 and Cys-153. An intrachain disulfide couples Cys-150 to Cys-153.

It belongs to the thioredoxin family. As to quaternary structure, interacts in vitro with LTO1.

It localises to the plastid. Its subcellular location is the chloroplast thylakoid membrane. Its function is as follows. Thiol-disulfide oxidoreductase that participates in various redox reactions in the chloroplast. Mediates the reduction of PSI-N in the thylakoid lumen. May interact and probably reduce other target proteins of the thylakoid membrane, such as FTSH2, FTSH8, LHCB5, atpA, atpB, atpE, petA and petC. Involved in the biogenesis of the plastid cytochrome b6f complex. Reducing equivalents are provided by stromal M-type thioredoxins and probably transduced through the thylakoid membrane by CCDA. Possesses low insulin disulfide bonds reducing activity. The polypeptide is Thioredoxin-like protein HCF164, chloroplastic (Arabidopsis thaliana (Mouse-ear cress)).